Here is a 158-residue protein sequence, read N- to C-terminus: MRKRAAKKRPLLPDPRFNDQLVTRFVNNLMWDGKKSTAFKVFYDAIDIIETKKQNDEKTSLEIWKDALTNVMPHVEVRSRRVGGATFQIPMQIRPDRKISMAMKWLILYARRRNEKSMAQRLASECLAAAKEEGAAVKKRMDTHKMAEANKAFSHFRF.

This sequence belongs to the universal ribosomal protein uS7 family. As to quaternary structure, part of the 30S ribosomal subunit. Contacts proteins S9 and S11.

In terms of biological role, one of the primary rRNA binding proteins, it binds directly to 16S rRNA where it nucleates assembly of the head domain of the 30S subunit. Is located at the subunit interface close to the decoding center, probably blocks exit of the E-site tRNA. In Flavobacterium johnsoniae (strain ATCC 17061 / DSM 2064 / JCM 8514 / BCRC 14874 / CCUG 350202 / NBRC 14942 / NCIMB 11054 / UW101) (Cytophaga johnsonae), this protein is Small ribosomal subunit protein uS7.